The chain runs to 166 residues: Early E3 18.5 kDa glycoprotein (166 aa).

A signal peptide spans 1 to 19; the sequence is MGPILVLLVLLSLLEAGSA. The Lumenal portion of the chain corresponds to 20-131; it reads NYDPCLDFDP…SKDNIVTFSI (112 aa). The N-linked (GlcNAc...) asparagine; by host glycan is linked to asparagine 31. 2 cysteine pairs are disulfide-bonded: cysteine 32-cysteine 50 and cysteine 44-cysteine 106. N-linked (GlcNAc...) asparagine; by host glycans are attached at residues asparagine 63, asparagine 67, and asparagine 97. Residues 132 to 152 traverse the membrane as a helical segment; the sequence is AYCLCACLLTALLCVCIHLLV. The Cytoplasmic segment spans residues 153-166; it reads TTRIKNANNKEKMP. A Di-lysine motif motif is present at residues 162–166; it reads KEKMP.

Belongs to the adenoviridae E19 family. Post-translationally, both disulfide bonds are absolutely critical for the interaction with MHC antigens. N-glycosylated; high-mannose.

The protein localises to the host endoplasmic reticulum membrane. Functionally, binds and retains class I heavy chains in the endoplasmic reticulum during the early period of virus infection, thereby impairing their transport to the cell surface. Also delays the expression of class I alleles that it cannot affect by direct retention. Binds transporters associated with antigen processing (TAP) and acts as a tapasin inhibitor, preventing class I/TAP association. In consequence, infected cells are masked for immune recognition by cytotoxic T-lymphocytes. The chain is Early E3 18.5 kDa glycoprotein from Human adenovirus B serotype 11 (strain BC34) (HAdV-11).